A 130-amino-acid chain; its full sequence is Small ribosomal subunit protein uS8A (130 aa).

Belongs to the universal ribosomal protein uS8 family.

The chain is Small ribosomal subunit protein uS8A (RpS15Aa) from Drosophila melanogaster (Fruit fly).